A 393-amino-acid polypeptide reads, in one-letter code: Ig gamma-1 chain C region, membrane-bound form (393 aa).

The tract at residues 1–97 (AKTTPPSVYP…ASSTKVDKKI (97 aa)) is CH1. A disulfide bridge links C27 with C82. The tract at residues 98 to 110 (VPRDCGCKPCICT) is hinge. A CH2 region spans residues 111-217 (VPEVSSVFIF…PIEKTISKTK (107 aa)). 2 cysteine pairs are disulfide-bonded: C138–C198 and C244–C302. N-linked (GlcNAc...) asparagine glycosylation occurs at N174. Residues 218 to 324 (GRPKAPQVYT…EKSLSHSPGL (107 aa)) form a CH3 region. The helical transmembrane segment at 340 to 357 (GLWTTITIFISLFLLSVC) threads the bilayer. At 358 to 393 (YSAAVTLFKVKWIFSSVVELKQTLVPEYKNMIGQAP) the chain is on the cytoplasmic side.

It is found in the cell membrane. In Mus musculus (Mouse), this protein is Ig gamma-1 chain C region, membrane-bound form (Ighg1).